The primary structure comprises 150 residues: MSTPFWQSKSLEHMTEEEWESLCDGCGKCCLHKLMDEDTDEIYYTNVACSWLNSKTCSCKDYPNRFTSGEECTKLTREDIDDFTWLPHTCAYRLLAENQPLPEWHPLITGSKSAMHAAGESVRNKVVYEIDVVDWEDHIQNLPDRLKPHN.

It belongs to the UPF0260 family.

The polypeptide is UPF0260 protein VIBHAR_03078 (Vibrio campbellii (strain ATCC BAA-1116)).